The primary structure comprises 365 residues: H-2 class I histocompatibility antigen, D-D alpha chain (365 aa).

The N-terminal stretch at 1-24 (MGAMAPRTLLLLLAAALGPTQTRA) is a signal peptide. The tract at residues 25–114 (GSHSLRYFVT…ALRYYNQSAG (90 aa)) is alpha-1. Topologically, residues 25–311 (GSHSLRYFVT…EPPSSTKTNT (287 aa)) are extracellular. An N-linked (GlcNAc...) asparagine glycan is attached at asparagine 110. The interval 115 to 206 (GSHTLQWMAG…KNGNATLLRT (92 aa)) is alpha-2. Cysteines 125 and 188 form a disulfide. Residue asparagine 200 is glycosylated (N-linked (GlcNAc...) asparagine). Residues 207–298 (DPPKAHVTHH…GLPEPLTLRW (92 aa)) form an alpha-3 region. Residues 209–297 (PKAHVTHHRR…EGLPEPLTLR (89 aa)) enclose the Ig-like C1-type domain. Cysteine 227 and cysteine 283 form a disulfide bridge. The tract at residues 299 to 311 (GKEEPPSSTKTNT) is connecting peptide. Residues 312 to 334 (VIIAVPVVLGAVVILGAVMAFVM) traverse the membrane as a helical segment. Over 335–365 (KRRRNTGGKGGDYALAPGSQSSDMSLPDCKV) the chain is Cytoplasmic. The interval 343-365 (KGGDYALAPGSQSSDMSLPDCKV) is disordered. A phosphoserine mark is found at serine 356 and serine 359.

The protein belongs to the MHC class I family. As to quaternary structure, heterodimer of an alpha chain and a beta chain (beta-2-microglobulin).

The protein localises to the membrane. Involved in the presentation of foreign antigens to the immune system. The chain is H-2 class I histocompatibility antigen, D-D alpha chain (H2-D1) from Mus musculus (Mouse).